A 144-amino-acid polypeptide reads, in one-letter code: UPF0102 protein BURPS668_3819 (144 aa).

A disordered region spans residues 1–28; that stretch reads MCHAREASLGTGEPEAAPRDNFPREAGS. The segment covering 16–28 has biased composition (basic and acidic residues); it reads AAPRDNFPREAGS.

Belongs to the UPF0102 family.

This is UPF0102 protein BURPS668_3819 from Burkholderia pseudomallei (strain 668).